Consider the following 319-residue polypeptide: MKRIGILTSGGDAPGMNAAIRAVTRTALANGIEVCGIRYGYAGLVAGDIFQMTSETVADKINRGGTFLYSARFPEFKEEEVQLKGIEQLKKHGIDALVVIGGDGSYHGALKLTRHGYNAVGLPGSIDNDIPYTDFTIGFDTACNTAMEAIDKIRDTATSHQRVFVVNVMGRDCGDIAMHVGVATGADAIVIPEEPYDIKEIAENLKQGFANGKKHGIVVLAEGVMDANKFKDELLKYGDFDARANILGHMQRGGSPTTRDRVLASEMGAYAVKLLLEGKGGLAVGIENNKLSHHDILDLFDAKHHGNYALYSLNKDLAK.

Gly11 contacts ATP. Position 21–25 (Arg21–Arg25) interacts with ADP. Residues Arg72–Phe73 and Gly102–Ser105 each bind ATP. A Mg(2+)-binding site is contributed by Asp103. Ser125–Asp127 provides a ligand contact to substrate. The active-site Proton acceptor is the Asp127. Arg154 provides a ligand contact to ADP. Substrate is bound by residues Arg162 and Met169–Arg171. Residues Gly185–Asp187 and Lys213–His215 contribute to the ADP site. Substrate-binding positions include Glu222, Arg243, and His249 to Arg252.

It belongs to the phosphofructokinase type A (PFKA) family. ATP-dependent PFK group I subfamily. Prokaryotic clade 'B1' sub-subfamily. Homotetramer. Mg(2+) is required as a cofactor.

The protein localises to the cytoplasm. The catalysed reaction is beta-D-fructose 6-phosphate + ATP = beta-D-fructose 1,6-bisphosphate + ADP + H(+). It functions in the pathway carbohydrate degradation; glycolysis; D-glyceraldehyde 3-phosphate and glycerone phosphate from D-glucose: step 3/4. With respect to regulation, allosterically activated by ADP and other diphosphonucleosides, and allosterically inhibited by phosphoenolpyruvate. Catalyzes the phosphorylation of D-fructose 6-phosphate to fructose 1,6-bisphosphate by ATP, the first committing step of glycolysis. This is ATP-dependent 6-phosphofructokinase from Lactobacillus gasseri (strain ATCC 33323 / DSM 20243 / BCRC 14619 / CIP 102991 / JCM 1131 / KCTC 3163 / NCIMB 11718 / NCTC 13722 / AM63).